A 688-amino-acid polypeptide reads, in one-letter code: Glycine--tRNA ligase beta subunit (688 aa).

It belongs to the class-II aminoacyl-tRNA synthetase family. In terms of assembly, tetramer of two alpha and two beta subunits.

Its subcellular location is the cytoplasm. The catalysed reaction is tRNA(Gly) + glycine + ATP = glycyl-tRNA(Gly) + AMP + diphosphate. The protein is Glycine--tRNA ligase beta subunit of Listeria monocytogenes serotype 4b (strain CLIP80459).